Consider the following 462-residue polypeptide: Histidine--tRNA ligase (462 aa).

It belongs to the class-II aminoacyl-tRNA synthetase family. Homodimer.

Its subcellular location is the cytoplasm. It catalyses the reaction tRNA(His) + L-histidine + ATP = L-histidyl-tRNA(His) + AMP + diphosphate + H(+). This Nostoc sp. (strain PCC 7120 / SAG 25.82 / UTEX 2576) protein is Histidine--tRNA ligase (hisS).